A 91-amino-acid polypeptide reads, in one-letter code: MPRSLKKGPFIDLHLLKKVETAVEKSDRKPIKTWSRRSMILPNMVGLTIAVHNGRQHVPVHVSEEMVGHKLGEFAATRTYRGHAADKKAKR.

The protein belongs to the universal ribosomal protein uS19 family.

Functionally, protein S19 forms a complex with S13 that binds strongly to the 16S ribosomal RNA. This Chromohalobacter salexigens (strain ATCC BAA-138 / DSM 3043 / CIP 106854 / NCIMB 13768 / 1H11) protein is Small ribosomal subunit protein uS19.